Consider the following 446-residue polypeptide: 23S rRNA (uracil(1939)-C(5))-methyltransferase RlmD (446 aa).

The 59-residue stretch at 6–64 folds into the TRAM domain; the sequence is KKLPQESITCEIESLSHEGRGVSHKDGKTLFVEGALPGETVTARYVNSRRSYDELAVEE. Residues Cys77, Cys83, Cys86, and Cys165 each contribute to the [4Fe-4S] cluster site. Residues Gln275, Phe304, Asn309, Glu325, Asp352, and Asp377 each contribute to the S-adenosyl-L-methionine site. Cys403 functions as the Nucleophile in the catalytic mechanism.

It belongs to the class I-like SAM-binding methyltransferase superfamily. RNA M5U methyltransferase family. RlmD subfamily.

It carries out the reaction uridine(1939) in 23S rRNA + S-adenosyl-L-methionine = 5-methyluridine(1939) in 23S rRNA + S-adenosyl-L-homocysteine + H(+). Catalyzes the formation of 5-methyl-uridine at position 1939 (m5U1939) in 23S rRNA. In Hahella chejuensis (strain KCTC 2396), this protein is 23S rRNA (uracil(1939)-C(5))-methyltransferase RlmD.